A 260-amino-acid polypeptide reads, in one-letter code: uncharacterized protein (260 aa).

Residues 8 to 166 (LALGSGGARG…VDRIPVSVVK (159 aa)) form the PNPLA domain. A GXSXG motif is present at residues 39–43 (GSSMG). Ser41 serves as the catalytic Nucleophile. Catalysis depends on Asp153, which acts as the Proton acceptor. The DGA/G signature appears at 153–155 (DGA).

The protein belongs to the NTE family.

This is an uncharacterized protein from Bacillus subtilis (strain 168).